The sequence spans 328 residues: Twinfilin (328 aa).

In terms of domain architecture, ADF-H 1 spans 1–137; the sequence is MSASVELKPT…DYQQIMKSLS (137 aa). The residue at position 143 (S143) is a Phosphoserine. In terms of domain architecture, ADF-H 2 spans 173-304; that stretch reads GVAMSIDDKA…TEKEILHAAG (132 aa). Residues 302 to 328 are disordered; it reads AAGISSPQAETSTTKTGFSRPRPPRRR. Over residues 306 to 318 the composition is skewed to polar residues; that stretch reads SSPQAETSTTKTG.

The protein belongs to the actin-binding proteins ADF family. Twinfilin subfamily. In terms of assembly, interacts with G-actin; ADP-actin form.

The protein localises to the cytoplasm. It is found in the cytoskeleton. Its function is as follows. Actin-binding protein involved in motile and morphological processes. Inhibits actin polymerization, likely by sequestering G-actin. Prevents actin filament assembly by forming a 1:1 complex with actin monomers, and inhibits the nucleotide exchange reaction of actin monomers. This chain is Twinfilin (twf1), found in Schizosaccharomyces pombe (strain 972 / ATCC 24843) (Fission yeast).